A 229-amino-acid polypeptide reads, in one-letter code: Glutathione S-transferase 1 (229 aa).

In terms of domain architecture, GST N-terminal spans 2-83 (SPVKVFGHPM…YILRKYGGTA (82 aa)). Glutathione is bound by residues 41 to 42 (HK), 54 to 55 (KM), and 67 to 68 (ES). Residues 93–223 (GIEELAMVDV…RVCKHMPTEF (131 aa)) enclose the GST C-terminal domain.

It belongs to the GST superfamily. Phi family.

It catalyses the reaction RX + glutathione = an S-substituted glutathione + a halide anion + H(+). Conjugation of reduced glutathione to a wide number of exogenous and endogenous hydrophobic electrophiles. The protein is Glutathione S-transferase 1 (GSTA1) of Triticum aestivum (Wheat).